The following is a 76-amino-acid chain: UPF0346 protein LBA0976 (76 aa).

Belongs to the UPF0346 family.

This Lactobacillus acidophilus (strain ATCC 700396 / NCK56 / N2 / NCFM) protein is UPF0346 protein LBA0976.